The primary structure comprises 838 residues: Multiphosphoryl transfer protein (838 aa).

The 141-residue stretch at Ala-7–Asp-147 folds into the PTS EIIA type-2 domain. His-67 serves as the catalytic Tele-phosphohistidine intermediate; for EIIA activity. His-67 bears the Phosphohistidine; by HPr mark. The region spanning Ala-161–Glu-253 is the HPr domain. Catalysis depends on His-175, which acts as the Pros-phosphohistidine intermediate; for HPr activity. His-175 carries the post-translational modification Phosphohistidine; by EI. Positions Ala-274 to Ala-838 are PTS EI. His-460 functions as the Tele-phosphohistidine intermediate; for PTS EI activity in the catalytic mechanism. A Phosphohistidine; by autocatalysis modification is found at His-460. Arg-567 and Arg-603 together coordinate phosphoenolpyruvate. 2 residues coordinate Mg(2+): Glu-697 and Asp-721. Phosphoenolpyruvate-binding positions include Asn-720–Asp-721 and Arg-731. Cys-768 (proton donor) is an active-site residue.

The protein belongs to the PEP-utilizing enzyme family. Mg(2+) is required as a cofactor.

It is found in the cytoplasm. The enzyme catalyses L-histidyl-[protein] + phosphoenolpyruvate = N(pros)-phospho-L-histidyl-[protein] + pyruvate. Its function is as follows. The phosphoenolpyruvate-dependent sugar phosphotransferase system (sugar PTS), a major carbohydrate active transport system, catalyzes the phosphorylation of incoming sugar substrates concomitantly with their translocation across the cell membrane. The enzyme II FruAB PTS system is involved in fructose transport. In Xanthomonas campestris pv. campestris (strain ATCC 33913 / DSM 3586 / NCPPB 528 / LMG 568 / P 25), this protein is Multiphosphoryl transfer protein.